The chain runs to 830 residues: ATP-dependent DNA helicase chl-1 (830 aa).

A Helicase ATP-binding domain is found at 1–403 (MDEFSFPFQP…HNLLYMKQLE (403 aa)). ATP is bound at residue 35 to 42 (SPTGTGKS). Composition is skewed to basic and acidic residues over residues 124–140 (GMVE…RDTD) and 157–168 (NDEKSEKQRDSD). The interval 124-173 (GMVEVSRKRKAPARDTDQFLEPQDEAAPSEEYNNDEKSEKQRDSDFFDDV) is disordered. [4Fe-4S] cluster is bound by residues Cys-222, Cys-240, Cys-272, and Cys-308. Residues 351 to 354 (DEAH) carry the DEAH box motif.

The protein belongs to the DEAD box helicase family. DEAH subfamily. DDX11/CHL1 sub-subfamily. The cofactor is [4Fe-4S] cluster.

It localises to the nucleus. It catalyses the reaction Couples ATP hydrolysis with the unwinding of duplex DNA at the replication fork by translocating in the 5'-3' direction. This creates two antiparallel DNA single strands (ssDNA). The leading ssDNA polymer is the template for DNA polymerase III holoenzyme which synthesizes a continuous strand.. The catalysed reaction is ATP + H2O = ADP + phosphate + H(+). Functionally, required for normal cell proliferation and chromosome stability. Plays a role in DNA repair during replication. This is ATP-dependent DNA helicase chl-1 from Caenorhabditis elegans.